A 412-amino-acid chain; its full sequence is D-amino acid dehydrogenase 3 (412 aa).

FAD is bound at residue 4 to 18 (IVVIGAGIAGVSTAY).

This sequence belongs to the DadA oxidoreductase family. It depends on FAD as a cofactor.

The catalysed reaction is a D-alpha-amino acid + A + H2O = a 2-oxocarboxylate + AH2 + NH4(+). Functionally, oxidative deamination of D-amino acids. The protein is D-amino acid dehydrogenase 3 (dadA3) of Mesorhizobium japonicum (strain LMG 29417 / CECT 9101 / MAFF 303099) (Mesorhizobium loti (strain MAFF 303099)).